We begin with the raw amino-acid sequence, 401 residues long: tRNA(Met) cytidine acetate ligase (401 aa).

ATP is bound by residues 7-20 (IVEY…HLYH), Gly-102, Asn-164, and Arg-189.

The protein belongs to the TmcAL family.

It localises to the cytoplasm. The enzyme catalyses cytidine(34) in elongator tRNA(Met) + acetate + ATP = N(4)-acetylcytidine(34) in elongator tRNA(Met) + AMP + diphosphate. Functionally, catalyzes the formation of N(4)-acetylcytidine (ac(4)C) at the wobble position of elongator tRNA(Met), using acetate and ATP as substrates. First activates an acetate ion to form acetyladenylate (Ac-AMP) and then transfers the acetyl group to tRNA to form ac(4)C34. This chain is tRNA(Met) cytidine acetate ligase, found in Caldanaerobacter subterraneus subsp. tengcongensis (strain DSM 15242 / JCM 11007 / NBRC 100824 / MB4) (Thermoanaerobacter tengcongensis).